The sequence spans 1076 residues: Atos homolog protein A (1076 aa).

Positions 24-32 (ALLITEGRT) are transactivation domain 1 (TAD1). Disordered stretches follow at residues 700 to 721 (ESMS…TQLN) and 739 to 765 (SDQL…QRRS). Basic and acidic residues predominate over residues 739–754 (SDQLKNEQDKQEDPTN). Residues 878–935 (LLGNFEESVLNYRFDPLGIVDGFTAEVGASGAFCPTHLTLPVEVSFYSVSDDNAPSPY) form a required for macropage invasion region. A transactivation domain 2 (TAD2) region spans residues 962–970 (FNPNKTVVK).

The protein belongs to the ATOS family.

It is found in the nucleus. Transcription regulator that syncronizes transcriptional and translational programs to promote macrophage invasion of tissues. The protein is Atos homolog protein A of Homo sapiens (Human).